The sequence spans 305 residues: Spermatogenesis-associated protein 4 (305 aa).

A Calponin-homology (CH) domain is found at 49-155; sequence SRLSRSVLRW…EEVYTLLTHR (107 aa).

Highly expressed in testis, the expression is observed precisely in seminiferous tubules.

It is found in the nucleus. In terms of biological role, may play a role in apoptosis regulation. The chain is Spermatogenesis-associated protein 4 (SPATA4) from Homo sapiens (Human).